Here is a 140-residue protein sequence, read N- to C-terminus: Large ribosomal subunit protein uL11 (140 aa).

It belongs to the universal ribosomal protein uL11 family. As to quaternary structure, part of the ribosomal stalk of the 50S ribosomal subunit. Interacts with L10 and the large rRNA to form the base of the stalk. L10 forms an elongated spine to which L12 dimers bind in a sequential fashion forming a multimeric L10(L12)X complex. In terms of processing, one or more lysine residues are methylated.

Its function is as follows. Forms part of the ribosomal stalk which helps the ribosome interact with GTP-bound translation factors. The polypeptide is Large ribosomal subunit protein uL11 (Brachyspira hyodysenteriae (strain ATCC 49526 / WA1)).